Reading from the N-terminus, the 169-residue chain is Ribosome maturation factor RimM (169 aa).

Positions 97–169 (EDEVYFKDLI…KIVVDWEYDY (73 aa)) constitute a PRC barrel domain.

Belongs to the RimM family. Binds ribosomal protein uS19.

Its subcellular location is the cytoplasm. In terms of biological role, an accessory protein needed during the final step in the assembly of 30S ribosomal subunit, possibly for assembly of the head region. Essential for efficient processing of 16S rRNA. May be needed both before and after RbfA during the maturation of 16S rRNA. It has affinity for free ribosomal 30S subunits but not for 70S ribosomes. This is Ribosome maturation factor RimM from Francisella tularensis subsp. tularensis (strain FSC 198).